The primary structure comprises 87 residues: Small ribosomal subunit protein bS20 (87 aa).

The tract at residues 1 to 21 is disordered; sequence MANHKSAEKRARQTIKKTERN.

Belongs to the bacterial ribosomal protein bS20 family.

In terms of biological role, binds directly to 16S ribosomal RNA. This is Small ribosomal subunit protein bS20 from Campylobacter jejuni subsp. jejuni serotype O:23/36 (strain 81-176).